The primary structure comprises 98 residues: Ribonuclease kappa (98 aa).

2 consecutive transmembrane segments (helical) span residues 13 to 33 and 65 to 85; these read ACGIVLSAWGVIMLIMLGIFF and VSYNCFIAASLYLLLGGFSFC.

This sequence belongs to the RNase K family. Interacts with the proton translocation complex V0 of the V-ATPase. Interacts with ATP6AP1. In terms of tissue distribution, expressed in brain (at protein level).

The protein resides in the endomembrane system. It is found in the cytoplasmic vesicle. The protein localises to the clathrin-coated vesicle membrane. In terms of biological role, endoribonuclease which preferentially cleaves ApU and ApG phosphodiester bonds. Hydrolyzes UpU bonds at a lower rate. Regulates the activity of vacuolar (H+)-ATPase (V-ATPase) which is responsible for acidifying and maintaining the pH of intracellular compartments. Required at an early stage of receptor-mediated endocytosis. This Bos taurus (Bovine) protein is Ribonuclease kappa (RNASEK).